The chain runs to 354 residues: Trans-L-3-hydroxyproline dehydratase (354 aa).

The active-site Proton acceptor is cysteine 104. Substrate is bound by residues 105–106 (GH), aspartate 269, and 274–275 (GS).

It belongs to the proline racemase family. As to quaternary structure, homodimer.

The enzyme catalyses trans-3-hydroxy-L-proline = 1-pyrroline-2-carboxylate + H2O. Functionally, catalyzes the dehydration of trans-3-hydroxy-L-proline to Delta(1)-pyrroline-2-carboxylate (Pyr2C). The sequence is that of Trans-L-3-hydroxyproline dehydratase (L3HYPDH) from Bos taurus (Bovine).